The sequence spans 492 residues: Phenylalanine--tRNA ligase alpha subunit (492 aa).

L-phenylalanine-binding positions include T335, 374–376 (QLE), and Y414. E416 contributes to the Mg(2+) binding site. L-phenylalanine is bound at residue F439.

Belongs to the class-II aminoacyl-tRNA synthetase family. Phe-tRNA synthetase alpha subunit type 2 subfamily. In terms of assembly, tetramer of two alpha and two beta subunits. It depends on Mg(2+) as a cofactor.

Its subcellular location is the cytoplasm. It catalyses the reaction tRNA(Phe) + L-phenylalanine + ATP = L-phenylalanyl-tRNA(Phe) + AMP + diphosphate + H(+). This Methanosarcina acetivorans (strain ATCC 35395 / DSM 2834 / JCM 12185 / C2A) protein is Phenylalanine--tRNA ligase alpha subunit.